The chain runs to 198 residues: V-type proton ATPase subunit E (198 aa).

This sequence belongs to the V-ATPase E subunit family.

Functionally, produces ATP from ADP in the presence of a proton gradient across the membrane. In Borrelia turicatae (strain 91E135), this protein is V-type proton ATPase subunit E.